The sequence spans 36 residues: Pancreatic polypeptide (36 aa).

Tyrosine 36 carries the post-translational modification Tyrosine amide.

This sequence belongs to the NPY family.

The protein localises to the secreted. Its function is as follows. Hormone secreted by pancreatic cells that acts as a regulator of pancreatic and gastrointestinal functions probably by signaling through the G protein-coupled receptor NPY4R2. This is Pancreatic polypeptide (PPY) from Didelphis virginiana (North American opossum).